Consider the following 677-residue polypeptide: DNA polymerase epsilon subunit B (677 aa).

Belongs to the DNA polymerase epsilon subunit B family. As to quaternary structure, heterotetramer. Consists of four subunits: POL2, DPB2, DPB3 and DPB4.

The protein localises to the nucleus. As accessory component of the DNA polymerase epsilon (DNA polymerase II) participates in chromosomal DNA replication. The polypeptide is DNA polymerase epsilon subunit B (DPB2) (Eremothecium gossypii (strain ATCC 10895 / CBS 109.51 / FGSC 9923 / NRRL Y-1056) (Yeast)).